The following is a 736-amino-acid chain: Zinc finger CCCH domain-containing protein 14 (736 aa).

An N-acetylmethionine modification is found at Met1. Polar residues-rich tracts occupy residues 77 to 103 (TTEP…SNFS) and 131 to 145 (VSTS…NVRQ). The segment at 77 to 145 (TTEPSSLKSS…QESKTTNVRQ (69 aa)) is disordered. Position 85 is a phosphoserine (Ser85). Glycyl lysine isopeptide (Lys-Gly) (interchain with G-Cter in SUMO2) cross-links involve residues Lys99, Lys139, Lys175, and Lys198. At Ser240 the chain carries Phosphoserine. Lys245 is covalently cross-linked (Glycyl lysine isopeptide (Lys-Gly) (interchain with G-Cter in SUMO2)). Ser281 is subject to Phosphoserine. Glycyl lysine isopeptide (Lys-Gly) (interchain with G-Cter in SUMO2) cross-links involve residues Lys283 and Lys295. A disordered region spans residues 310-350 (HDGEEEEEDDDYGSRTGSISSSVSVPAKPERRPSLPPSKQA). A phosphoserine mark is found at Ser327 and Ser343. At Lys357 the chain carries N6-acetyllysine; alternate. A Glycyl lysine isopeptide (Lys-Gly) (interchain with G-Cter in SUMO2); alternate cross-link involves residue Lys357. A Glycyl lysine isopeptide (Lys-Gly) (interchain with G-Cter in SUMO2) cross-link involves residue Lys378. Phosphoserine is present on residues Ser390 and Ser409. The tract at residues 398–430 (VVQGQSRTPRISPPIKEEETKGDSVEKNQGTQQ) is disordered. The segment covering 412–423 (IKEEETKGDSVE) has biased composition (basic and acidic residues). A Glycyl lysine isopeptide (Lys-Gly) (interchain with G-Cter in SUMO2) cross-link involves residue Lys413. Ser421 is subject to Phosphoserine. A Glycyl lysine isopeptide (Lys-Gly) (interchain with G-Cter in SUMO2) cross-link involves residue Lys489. Phosphoserine is present on residues Ser498, Ser515, Ser527, and Ser620. 5 C3H1-type zinc fingers span residues 595-620 (EKLL…HPIS), 621-640 (PCKA…VHPN), 641-656 (CKYD…PFTH), 682-699 (CRYF…YHPK), and 701-719 (CRFN…HPTI).

It belongs to the ZC3H14 family. In terms of assembly, homodimer; facilitating circular RNAs (circRNAs) formation. Associates with the spliceosome. Interacts with HOOK2. Interacts with ZFC3H1 in a RNase-sensitive manner. In terms of tissue distribution, expressed in fetal and adult brain. Expressed in fetal and adult temporal lobe.

Its subcellular location is the nucleus speckle. It is found in the cytoplasm. Functionally, RNA-binding protein involved in the biogenesis of circular RNAs (circRNAs), which are produced by back-splicing circularization of pre-mRNAs. Acts by binding to both exon-intron boundary and 3'-UTR of pre-mRNAs to promote circRNA biogenesis through dimerization and the association with the spliceosome. Required for spermatogenesis via involvement in circRNA biogenesis. Regulates the pre-mRNA processing of ATP5MC1; preventing its degradation. Also binds the poly(A) tail of mRNAs; controlling poly(A) length in neuronal cells. In Homo sapiens (Human), this protein is Zinc finger CCCH domain-containing protein 14.